Consider the following 118-residue polypeptide: Secreted effector CSEP0064 (118 aa).

A signal peptide spans 1-21; the sequence is MRPFQLLSALAIFINLEAVEA. The cysteines at positions 27 and 113 are disulfide-linked.

In terms of assembly, interacts in planta with the pathogenesis-related protein PR10.

It is found in the secreted. The protein localises to the host cell. In terms of biological role, secreted effector that increases susceptibility to infection in both monocotyledonous and dicotyledonous plants. Non-catalytic homolog of fungal RNases that binds host RNA and inhibits the degradation of host ribosomal RNA induced by ribosome-inactivating proteins (RIPs), preventing host cell death, an inviable interaction and demise of the fungus. In Blumeria graminis f. sp. hordei (strain DH14) (Barley powdery mildew), this protein is Secreted effector CSEP0064.